Reading from the N-terminus, the 112-residue chain is ATP synthase epsilon chain (112 aa).

The protein belongs to the ATPase epsilon chain family. In terms of assembly, F-type ATPases have 2 components, CF(1) - the catalytic core - and CF(0) - the membrane proton channel. CF(1) has five subunits: alpha(3), beta(3), gamma(1), delta(1), epsilon(1). CF(0) has three main subunits: a, b and c.

It is found in the cell membrane. Functionally, produces ATP from ADP in the presence of a proton gradient across the membrane. The protein is ATP synthase epsilon chain of Rickettsia africae (strain ESF-5).